A 319-amino-acid chain; its full sequence is Replication factor C small subunit 2 (319 aa).

Position 44-51 (Gly-44–Thr-51) interacts with ATP.

Belongs to the activator 1 small subunits family. RfcS subfamily. As to quaternary structure, heteromultimer composed of small subunits (RfcS) and large subunits (RfcL).

Its function is as follows. Part of the RFC clamp loader complex which loads the PCNA sliding clamp onto DNA. The sequence is that of Replication factor C small subunit 2 from Pyrobaculum aerophilum (strain ATCC 51768 / DSM 7523 / JCM 9630 / CIP 104966 / NBRC 100827 / IM2).